The primary structure comprises 359 residues: Phosphoserine aminotransferase (359 aa).

Residue R41 coordinates L-glutamate. Pyridoxal 5'-phosphate-binding residues include W101, T151, D170, and Q193. K194 carries the post-translational modification N6-(pyridoxal phosphate)lysine. 235-236 (NT) lines the pyridoxal 5'-phosphate pocket.

This sequence belongs to the class-V pyridoxal-phosphate-dependent aminotransferase family. SerC subfamily. As to quaternary structure, homodimer. Requires pyridoxal 5'-phosphate as cofactor.

It localises to the cytoplasm. The catalysed reaction is O-phospho-L-serine + 2-oxoglutarate = 3-phosphooxypyruvate + L-glutamate. The enzyme catalyses 4-(phosphooxy)-L-threonine + 2-oxoglutarate = (R)-3-hydroxy-2-oxo-4-phosphooxybutanoate + L-glutamate. The protein operates within amino-acid biosynthesis; L-serine biosynthesis; L-serine from 3-phospho-D-glycerate: step 2/3. It functions in the pathway cofactor biosynthesis; pyridoxine 5'-phosphate biosynthesis; pyridoxine 5'-phosphate from D-erythrose 4-phosphate: step 3/5. Its function is as follows. Catalyzes the reversible conversion of 3-phosphohydroxypyruvate to phosphoserine and of 3-hydroxy-2-oxo-4-phosphonooxybutanoate to phosphohydroxythreonine. This Laribacter hongkongensis (strain HLHK9) protein is Phosphoserine aminotransferase.